The sequence spans 402 residues: Protein rds1 (402 aa).

Its function is as follows. May have a function in stress-related responses of the cell. This chain is Protein rds1 (rds1), found in Schizosaccharomyces pombe (strain 972 / ATCC 24843) (Fission yeast).